A 117-amino-acid polypeptide reads, in one-letter code: Large ribosomal subunit protein bL20 (117 aa).

This sequence belongs to the bacterial ribosomal protein bL20 family.

Its function is as follows. Binds directly to 23S ribosomal RNA and is necessary for the in vitro assembly process of the 50S ribosomal subunit. It is not involved in the protein synthesizing functions of that subunit. The protein is Large ribosomal subunit protein bL20 of Mycoplasma mobile (strain ATCC 43663 / 163K / NCTC 11711) (Mesomycoplasma mobile).